The following is a 544-amino-acid chain: Lysophosphatidylcholine acyltransferase 2 (544 aa).

Topologically, residues 1 to 57 (MSRCAQAAEVAATVPGAGVGNVGLRPPMVPRQASFFPPPVPNPFVQQTQIGSARRVQ) are cytoplasmic. Residues 58–78 (IVLLGIILLPIRVLLVALILL) traverse the membrane as a helical; Signal-anchor for type II membrane protein segment. The Lumenal portion of the chain corresponds to 79–544 (LAWPFAAIST…EESTSDKKDD (466 aa)). The short motif at 146-151 (HSTFFD) is the HXXXXD motif element. Positions 220-223 (EGTC) match the EGTC motif motif. 2 consecutive EF-hand domains span residues 391 to 426 (PVSD…LCNP) and 428 to 463 (NTEE…SLGV). Residues aspartate 404, asparagine 406, aspartate 408, serine 410, glutamate 415, aspartate 441, aspartate 443, aspartate 445, tyrosine 447, and glutamate 452 each contribute to the Ca(2+) site. The span at 518 to 529 (VQTTPSTASNKV) shows a compositional bias: polar residues. Residues 518–544 (VQTTPSTASNKVSPEKHEESTSDKKDD) are disordered. The segment covering 530–544 (SPEKHEESTSDKKDD) has biased composition (basic and acidic residues).

It belongs to the 1-acyl-sn-glycerol-3-phosphate acyltransferase family.

It is found in the endoplasmic reticulum membrane. The protein resides in the golgi apparatus membrane. Its subcellular location is the cell membrane. The protein localises to the lipid droplet. The catalysed reaction is a 1-acyl-sn-glycero-3-phosphocholine + an acyl-CoA = a 1,2-diacyl-sn-glycero-3-phosphocholine + CoA. It carries out the reaction a 1-O-alkyl-sn-glycero-3-phosphocholine + acetyl-CoA = a 1-O-alkyl-2-acetyl-sn-glycero-3-phosphocholine + CoA. The enzyme catalyses a 1-acyl-sn-glycero-3-phosphate + an acyl-CoA = a 1,2-diacyl-sn-glycero-3-phosphate + CoA. It catalyses the reaction a 1-O-(1Z-alkenyl)-sn-glycero-3-phosphocholine + an acyl-CoA = a 1-O-(1Z-alkenyl)-2-acyl-sn-glycero-3-phosphocholine + CoA. The catalysed reaction is 1-hexadecanoyl-sn-glycero-3-phosphate + (9Z)-octadecenoyl-CoA = 1-hexadecanoyl-2-(9Z-octadecenoyl)-sn-glycero-3-phosphate + CoA. It carries out the reaction 1-(9Z-octadecenoyl)-sn-glycero-3-phosphate + (9Z)-octadecenoyl-CoA = 1,2-di-(9Z-octadecenoyl)-sn-glycero-3-phosphate + CoA. The enzyme catalyses 1-(9Z-octadecenoyl)-sn-glycero-3-phosphate + hexadecanoyl-CoA = 1-(9Z)-octadecenoyl-2-hexadecanoyl-sn-glycero-3-phosphate + CoA. It catalyses the reaction 1-heptadecanoyl-sn-glycero-3-phosphate + (9Z)-octadecenoyl-CoA = 1-heptadecanoyl-2-(9Z)-octadecenoyl-sn-glycero-3-phosphate + CoA. The catalysed reaction is 1-octadecanoyl-sn-glycero-3-phosphate + (9Z)-octadecenoyl-CoA = 1-octadecanoyl-2-(9Z-octadecenoyl)-sn-glycero-3-phosphate + CoA. It carries out the reaction heptadecanoyl-CoA + 1-(9Z-octadecenoyl)-sn-glycero-3-phosphate = 1-(9Z)-octadecenoyl-2-heptadecanoyl-sn-glycero-3-phosphate + CoA. The enzyme catalyses 1-(9Z-octadecenoyl)-sn-glycero-3-phosphate + (9Z,12Z)-octadecadienoyl-CoA = 1-(9Z)-octadecenoyl-2-(9Z,12Z)-octadecadienoyl-sn-glycero-3-phosphate + CoA. It catalyses the reaction 1-(9Z-octadecenoyl)-sn-glycero-3-phosphate + tetradecanoyl-CoA = 1-(9Z)-octadecenoyl-2-tetradecanoyl-sn-glycero-3-phosphate + CoA. The catalysed reaction is pentadecanoyl-CoA + 1-(9Z-octadecenoyl)-sn-glycero-3-phosphate = 1-(9Z)-octadecenoyl-2-pentadecanoyl-sn-glycero-3-phosphate + CoA. It carries out the reaction nonadecanoyl-CoA + 1-(9Z-octadecenoyl)-sn-glycero-3-phosphate = 1-(9Z)-octadecenoyl-2-nonadecanoyl-sn-glycero-3-phosphate + CoA. The enzyme catalyses 1-hexadecanoyl-sn-glycero-3-phosphocholine + (9Z)-octadecenoyl-CoA = 1-hexadecanoyl-2-(9Z-octadecenoyl)-sn-glycero-3-phosphocholine + CoA. It catalyses the reaction 1-O-hexadecyl-sn-glycero-3-phosphocholine + acetyl-CoA = 1-O-hexadecyl-2-acetyl-sn-glycero-3-phosphocholine + CoA. The catalysed reaction is 1-O-octadecyl-sn-glycero-3-phosphocholine + acetyl-CoA = 1-O-octadecyl-2-acetyl-sn-glycero-3-phosphocholine + CoA. It carries out the reaction 1-hexadecanoyl-sn-glycero-3-phosphocholine + acetyl-CoA = 1-hexadecanoyl-2-acetyl-sn-glycero-3-phosphocholine + CoA. The enzyme catalyses 1-octadecanoyl-sn-glycero-3-phosphocholine + acetyl-CoA = 1-octadecanoyl-2-acetyl-sn-glycero-3-phosphocholine + CoA. It catalyses the reaction a 1-O-(1Z-alkenyl)-sn-glycero-3-phosphocholine + acetyl-CoA = 1-O-(1Z)-alkenyl-2-acetyl-sn-glycero-3-phosphocholine + CoA. The catalysed reaction is 1-O-octadecyl-sn-glycero-3-phosphocholine + (5Z,8Z,11Z,14Z)-eicosatetraenoyl-CoA = 1-O-octadecyl-2-(5Z,8Z,11Z,14Z)-eicosatetraenoyl-sn-glycero-3-phosphocholine + CoA. It functions in the pathway lipid metabolism; phospholipid metabolism. Its function is as follows. Exhibits both acyltransferase and acetyltransferase activities. Catalyzes the conversion of lysophosphatidylcholine (1-acyl-sn-glycero-3-phosphocholine or LPC) into phosphatidylcholine (1,2-diacyl-sn-glycero-3-phosphocholine or PC). Catalyzes the conversion 1-acyl-sn-glycerol-3-phosphate (lysophosphatidic acid or LPA) into 1,2-diacyl-sn-glycerol-3-phosphate (phosphatidic acid or PA) by incorporating an acyl moiety at the sn-2 position of the glycerol backbone. Involved in platelet-activating factor (PAF) biosynthesis by catalyzing the conversion of the PAF precursor, 1-O-alkyl-sn-glycero-3-phosphocholine (lyso-PAF) into 1-O-alkyl-2-acetyl-sn-glycero-3-phosphocholine (PAF). Also converts lyso-PAF to 1-O-alkyl-2-acyl-sn-glycero-3-phosphocholine (PC), a major component of cell membranes and a PAF precursor. Under resting conditions, acyltransferase activity is preferred. Upon acute inflammatory stimulus, acetyltransferase activity is enhanced and PAF synthesis increases. Involved in the regulation of lipid droplet number and size. This chain is Lysophosphatidylcholine acyltransferase 2 (LPCAT2), found in Homo sapiens (Human).